The chain runs to 364 residues: Pre-small/secreted glycoprotein (364 aa).

An N-terminal signal peptide occupies residues 1–32 (MGVTGILQLPRDRFKRTSFFLWVIILFQRTFS). A glycan (N-linked (GlcNAc...) asparagine; by host) is linked at Asn40. Intrachain disulfides connect Cys108/Cys135 and Cys121/Cys147. N-linked (GlcNAc...) asparagine; by host glycans are attached at residues Asn204, Asn228, Asn238, Asn257, and Asn268.

Belongs to the filoviruses glycoprotein family. Homodimer; disulfide-linked. The homodimers are linked by two disulfide bonds in a parallel orientation. In terms of assembly, monomer. Post-translationally, this precursor is processed into mature sGP and delta-peptide by host furin or furin-like proteases. The cleavage site corresponds to the furin optimal cleavage sequence [KR]-X-[KR]-R. N-glycosylated. In terms of processing, O-glycosylated.

It localises to the secreted. In terms of biological role, seems to possess an anti-inflammatory activity as it can reverse the barrier-decreasing effects of TNF alpha. Might therefore contribute to the lack of inflammatory reaction seen during infection in spite the of extensive necrosis and massive virus production. Does not seem to be involved in activation of primary macrophages. Does not seem to interact specifically with neutrophils. Its function is as follows. Viroporin that permeabilizes mammalian cell plasma membranes. It acts by altering permeation of ionic compounds and small molecules. This activity may lead to viral enterotoxic activity. This Zaire ebolavirus (strain Eckron-76) (ZEBOV) protein is Pre-small/secreted glycoprotein (GP).